Reading from the N-terminus, the 443-residue chain is ATP-dependent protease ATPase subunit HslU (443 aa).

Residues Ile18 and 60 to 65 (GVGKTE) contribute to the ATP site. The tract at residues 138–158 (PAENQWGEKEQNEDKGTRQTF) is disordered. Over residues 143–154 (WGEKEQNEDKGT) the composition is skewed to basic and acidic residues. The ATP site is built by Asp255, Glu321, and Arg393.

The protein belongs to the ClpX chaperone family. HslU subfamily. A double ring-shaped homohexamer of HslV is capped on each side by a ring-shaped HslU homohexamer. The assembly of the HslU/HslV complex is dependent on binding of ATP.

Its subcellular location is the cytoplasm. ATPase subunit of a proteasome-like degradation complex; this subunit has chaperone activity. The binding of ATP and its subsequent hydrolysis by HslU are essential for unfolding of protein substrates subsequently hydrolyzed by HslV. HslU recognizes the N-terminal part of its protein substrates and unfolds these before they are guided to HslV for hydrolysis. In Pseudoalteromonas atlantica (strain T6c / ATCC BAA-1087), this protein is ATP-dependent protease ATPase subunit HslU.